The sequence spans 272 residues: Shikimate dehydrogenase (NADP(+)) (272 aa).

Shikimate is bound by residues 14 to 16 (SKS) and threonine 61. The active-site Proton acceptor is lysine 65. Glutamate 77 is a binding site for NADP(+). Residues asparagine 86 and aspartate 102 each contribute to the shikimate site. NADP(+) is bound by residues 126–130 (GAGGA), 149–154 (NRTVSR), and methionine 213. Tyrosine 215 is a shikimate binding site. Glycine 237 serves as a coordination point for NADP(+).

Belongs to the shikimate dehydrogenase family. In terms of assembly, homodimer.

The catalysed reaction is shikimate + NADP(+) = 3-dehydroshikimate + NADPH + H(+). Its pathway is metabolic intermediate biosynthesis; chorismate biosynthesis; chorismate from D-erythrose 4-phosphate and phosphoenolpyruvate: step 4/7. Functionally, involved in the biosynthesis of the chorismate, which leads to the biosynthesis of aromatic amino acids. Catalyzes the reversible NADPH linked reduction of 3-dehydroshikimate (DHSA) to yield shikimate (SA). The protein is Shikimate dehydrogenase (NADP(+)) of Escherichia coli O139:H28 (strain E24377A / ETEC).